The following is a 208-amino-acid chain: GATA transcription factor 20 (208 aa).

The GATA-type zinc finger occupies 94–119; that stretch reads CASCDTTSTPLWRNGPKGPKSLCNAC.

Belongs to the type IV zinc-finger family. Class B subfamily.

Its subcellular location is the nucleus. Functionally, transcriptional regulator that specifically binds 5'-GATA-3' or 5'-GAT-3' motifs within gene promoters. In Arabidopsis thaliana (Mouse-ear cress), this protein is GATA transcription factor 20.